The chain runs to 311 residues: Methionyl-tRNA formyltransferase (311 aa).

110-113 (SLLP) contacts (6S)-5,6,7,8-tetrahydrofolate.

This sequence belongs to the Fmt family.

It catalyses the reaction L-methionyl-tRNA(fMet) + (6R)-10-formyltetrahydrofolate = N-formyl-L-methionyl-tRNA(fMet) + (6S)-5,6,7,8-tetrahydrofolate + H(+). In terms of biological role, attaches a formyl group to the free amino group of methionyl-tRNA(fMet). The formyl group appears to play a dual role in the initiator identity of N-formylmethionyl-tRNA by promoting its recognition by IF2 and preventing the misappropriation of this tRNA by the elongation apparatus. The polypeptide is Methionyl-tRNA formyltransferase (Streptococcus equi subsp. zooepidemicus (strain H70)).